The chain runs to 208 residues: FMN-dependent NADH:quinone oxidoreductase (208 aa).

FMN is bound by residues S10, 16–18 (SRS), and 96–99 (MYNF).

The protein belongs to the azoreductase type 1 family. Homodimer. It depends on FMN as a cofactor.

It carries out the reaction 2 a quinone + NADH + H(+) = 2 a 1,4-benzosemiquinone + NAD(+). The catalysed reaction is N,N-dimethyl-1,4-phenylenediamine + anthranilate + 2 NAD(+) = 2-(4-dimethylaminophenyl)diazenylbenzoate + 2 NADH + 2 H(+). Functionally, quinone reductase that provides resistance to thiol-specific stress caused by electrophilic quinones. Also exhibits azoreductase activity. Catalyzes the reductive cleavage of the azo bond in aromatic azo compounds to the corresponding amines. This Xanthobacter autotrophicus (strain ATCC BAA-1158 / Py2) protein is FMN-dependent NADH:quinone oxidoreductase.